The primary structure comprises 226 residues: Large ribosomal subunit protein uL1 (226 aa).

The protein belongs to the universal ribosomal protein uL1 family. In terms of assembly, part of the 50S ribosomal subunit.

Its function is as follows. Binds directly to 23S rRNA. The L1 stalk is quite mobile in the ribosome, and is involved in E site tRNA release. Functionally, protein L1 is also a translational repressor protein, it controls the translation of the L11 operon by binding to its mRNA. This chain is Large ribosomal subunit protein uL1, found in Borreliella burgdorferi (strain ZS7) (Borrelia burgdorferi).